A 167-amino-acid chain; its full sequence is uncharacterized protein (167 aa).

Residues 4 to 24 (IIGLFFIIILIVINISILAYD) form a helical membrane-spanning segment.

The protein resides in the membrane. This is an uncharacterized protein from Rickettsia prowazekii (strain Madrid E).